We begin with the raw amino-acid sequence, 158 residues long: Urease accessory protein UreE (158 aa).

This sequence belongs to the UreE family.

The protein localises to the cytoplasm. Involved in urease metallocenter assembly. Binds nickel. Probably functions as a nickel donor during metallocenter assembly. The polypeptide is Urease accessory protein UreE (Klebsiella pneumoniae (strain 342)).